We begin with the raw amino-acid sequence, 249 residues long: Transcriptional activator protein EsaR (249 aa).

Residues 174-239 (QSADKTIFSS…QAIRLGVELD (66 aa)) enclose the HTH luxR-type domain. A DNA-binding region (H-T-H motif) is located at residues 198–217 (YAEIAAITGISVSTVKFHIK).

This sequence belongs to the autoinducer-regulated transcriptional regulatory protein family.

In terms of biological role, functions as a potential OhlL-responsive transcriptional regulator. This is Transcriptional activator protein EsaR (esaR) from Pantoea stewartii subsp. stewartii (Erwinia stewartii).